We begin with the raw amino-acid sequence, 206 residues long: Transmembrane 4 L6 family member 19 (206 aa).

The Cytoplasmic segment spans residues 1 to 16 (MLSFSRVVNCSRTCSR). Residues 17–37 (FLGLSLGTASLCAAGANIALL) traverse the membrane as a helical segment. Topologically, residues 38–54 (FPNWDVTYLMRGLIGKH) are extracellular. Residues 55–75 (AMLGSGLWGGGLMVLLAATLI) form a helical membrane-spanning segment. Residues 76-89 (SMTGSFSKSAPCLQ) lie on the Cytoplasmic side of the membrane. A helical membrane pass occupies residues 90–110 (VLIALLSSGLALLGAVICFVT). Over 111–171 (SGVALKDGPF…PSKAVVWHVA (61 aa)) the chain is Extracellular. Asn-129 carries N-linked (GlcNAc...) asparagine glycosylation. The chain crosses the membrane as a helical span at residues 172-192 (FFSILLCISLLQLLLVAIHLV). The interval 182–192 (LQLLLVAIHLV) is important for homodimerization. Topologically, residues 193-206 (NSILGLFCSFCEKH) are cytoplasmic.

The protein belongs to the L6 tetraspanin family. May form homodimers and homooligomers. Interacts with integrins ITGAV and ITGB3. Interacts with components of members of the V0 complex of vacuolar(H+)-ATPase (V-ATPase), including ATP6V0B and ATP6V0D2; this interaction inhibits V1-V0 complex assembly. As to expression, predominantly expressed in osteoclasts (at protein level). Also expressed in white adipose tissue, as well as in bone marrow-derived macrophages.

The protein localises to the lysosome membrane. It is found in the cytoplasm. It localises to the cytoskeleton. The protein resides in the cell projection. Its subcellular location is the filopodium. In terms of biological role, negatively regulates vacuolar (H+)-ATPase (V-ATPase) activity by interacting with members of V-ATPase V0 complex and hence inhibiting V1-V0 assembly. Required for multinucleation during osteoclast differentiation. The sequence is that of Transmembrane 4 L6 family member 19 (Tm4sf19) from Mus musculus (Mouse).